The chain runs to 182 residues: Large ribosomal subunit protein uL6 (182 aa).

This sequence belongs to the universal ribosomal protein uL6 family. In terms of assembly, part of the 50S ribosomal subunit.

This protein binds to the 23S rRNA, and is important in its secondary structure. It is located near the subunit interface in the base of the L7/L12 stalk, and near the tRNA binding site of the peptidyltransferase center. The protein is Large ribosomal subunit protein uL6 of Methanococcus maripaludis (strain C5 / ATCC BAA-1333).